A 30-amino-acid chain; its full sequence is Cycloviolacin-O9 (30 aa).

A cross-link (cyclopeptide (Gly-Asn)) is located at residues 1-30; sequence GIPCGESCVWIPCLTSAVGCSCKSKVCYRN. 3 cysteine pairs are disulfide-bonded: cysteine 4–cysteine 20, cysteine 8–cysteine 22, and cysteine 13–cysteine 27.

Post-translationally, this is a cyclic peptide.

In terms of biological role, probably participates in a plant defense mechanism. The chain is Cycloviolacin-O9 from Viola odorata (Sweet violet).